A 124-amino-acid chain; its full sequence is Small ribosomal subunit protein uS13 (124 aa).

The tract at residues 94–124 (GLPLRGQRTKNNSRTRKGKRKTVANKKKATK) is disordered. The segment covering 100 to 124 (QRTKNNSRTRKGKRKTVANKKKATK) has biased composition (basic residues).

Belongs to the universal ribosomal protein uS13 family. In terms of assembly, part of the 30S ribosomal subunit. Forms a loose heterodimer with protein S19. Forms two bridges to the 50S subunit in the 70S ribosome.

Functionally, located at the top of the head of the 30S subunit, it contacts several helices of the 16S rRNA. In the 70S ribosome it contacts the 23S rRNA (bridge B1a) and protein L5 of the 50S subunit (bridge B1b), connecting the 2 subunits; these bridges are implicated in subunit movement. Contacts the tRNAs in the A and P-sites. This is Small ribosomal subunit protein uS13 from Flavobacterium psychrophilum (strain ATCC 49511 / DSM 21280 / CIP 103535 / JIP02/86).